A 507-amino-acid polypeptide reads, in one-letter code: MASSSSDLTLDDHHHLTAVAAASGQATQKLQEFLSRLEEERLKIDAFKRELPLCMQLLNHAMEAYRQQLEAYQMGSQHSAAAAAAARAPLVLEEFIPVKNIGIDVVAADKAAAAGGNSVSSEKASWMVSAQLWNAPASASAADTAAKGPQTPKEHSEHHPLDTSPKLITALDGGGGGGGAFLPFSKDNAMGDGSAAAAAALPELALAPAEKAADAITIAAGEVDKKPYAHDNGVVARSREAQNGGKPPSTPSDGQAVPPPPQPHRKARRCWSPELHRRFVNALQILGGAQVATPKQIRELMKVDGLTNDEVKSHLQKYRLHTRRPMPSPAPPTAATPQLVVLGGIWVPPEYATQAAGPAIYGAHPATQPHYTAAVAAQEYYHHHHHHLQHHPAAAALVHHRAVAPPPPLPPQQQLAPPYSAKSSASARLGSPDSDGRGSGGGGGAAASGAGRDMSESIEEEGEGEEREDDDDDDEMAATNNAHAVDGDDDNDEINTTTTTSAGAINY.

2 disordered regions span residues 139–172 (ASAADTAAKGPQTPKEHSEHHPLDTSPKLITALD) and 238–268 (SREAQNGGKPPSTPSDGQAVPPPPQPHRKAR). Residues 152-161 (PKEHSEHHPL) show a composition bias toward basic and acidic residues. Positions 263–323 (PHRKARRCWS…HLQKYRLHTR (61 aa)) constitute an HTH myb-type domain. Positions 294–319 (PKQIRELMKVDGLTNDEVKSHLQKYR) form a DNA-binding region, H-T-H motif. The segment at 402–507 (AVAPPPPLPP…TTTSAGAINY (106 aa)) is disordered. The span at 412-433 (QQQLAPPYSAKSSASARLGSPD) shows a compositional bias: low complexity. Residues 437 to 446 (RGSGGGGGAA) are compositionally biased toward gly residues. Over residues 456–476 (ESIEEEGEGEEREDDDDDDEM) the composition is skewed to acidic residues.

In terms of assembly, interacts with ACA5.

The protein localises to the nucleus. Probable transcription factor that may play a role in regulatory networks controlling development and metabolism. This is Transcription factor NIGTH1 from Oryza sativa subsp. japonica (Rice).